We begin with the raw amino-acid sequence, 95 residues long: MKDPRDIIKRPIITENTMNLIGQKKYTFEVDVKANKTEVKDAVEKIFGVKVAKVNIMNYKGKFKRVGRYSGYTNRRRKAIVTLTPDSKEIELFEV.

Belongs to the universal ribosomal protein uL23 family. As to quaternary structure, part of the 50S ribosomal subunit. Contacts protein L29, and trigger factor when it is bound to the ribosome.

One of the early assembly proteins it binds 23S rRNA. One of the proteins that surrounds the polypeptide exit tunnel on the outside of the ribosome. Forms the main docking site for trigger factor binding to the ribosome. In Geobacillus kaustophilus (strain HTA426), this protein is Large ribosomal subunit protein uL23.